We begin with the raw amino-acid sequence, 571 residues long: Folylpolyglutamate synthase (571 aa).

122–125 lines the ATP pocket; it reads GKGS. Positions 146, 215, and 243 each coordinate Mg(2+). ATP contacts are provided by Arg363 and Asp385.

Belongs to the folylpolyglutamate synthase family. Requires a monovalent cation as cofactor. In terms of tissue distribution, expressed in both shoots and roots, but expression in roots is higher compared with shoots. Distinct expression in the quiescent center (QC) region of the root tip. Also expressed in vascular tissues of the cotyledons and hypocotyls, and the first true leaves of 7 days old seedlings.

It is found in the plastid. It localises to the chloroplast. The catalysed reaction is (6S)-5,6,7,8-tetrahydrofolyl-(gamma-L-Glu)(n) + L-glutamate + ATP = (6S)-5,6,7,8-tetrahydrofolyl-(gamma-L-Glu)(n+1) + ADP + phosphate + H(+). It functions in the pathway cofactor biosynthesis; tetrahydrofolylpolyglutamate biosynthesis. Catalyzes conversion of folates to polyglutamate derivatives allowing concentration of folate compounds in the cell and the intracellular retention of these cofactors, which are important substrates for most of the folate-dependent enzymes that are involved in one-carbon transfer reactions involved in purine, pyrimidine and amino acid synthesis. Essential for organellar and whole-plant folate homeostasis. Required for postembryonic root development. Generates polyglutamylated folate cofactors to support C1 metabolism required for meristem maintenance and cell expansion during postembryonic root development. This Arabidopsis thaliana (Mouse-ear cress) protein is Folylpolyglutamate synthase.